A 744-amino-acid chain; its full sequence is Tripartite motif-containing protein 2 (744 aa).

The residue at position 10 (serine 10) is a Phosphoserine. The RING-type zinc finger occupies 23 to 64 (CSICLERYKNPKVLPCLHTFCERCLQNYIPAHSLTLSCPVCR). The B box-type zinc-finger motif lies at 113–154 (GKPLSCPNHDGNVMEFYCQSCETAMCRECTEGEHAEHPTVPL). 4 residues coordinate Zn(2+): cysteine 118, histidine 121, cysteine 141, and histidine 146. The Filamin repeat unit spans residues 320 to 421 (TTNAVASETV…IRGSPFKLKV (102 aa)). At threonine 371 the chain carries Phosphothreonine. Phosphoserine occurs at positions 375, 424, and 428. Positions 432–462 (EGVKRRVKSPGSGHVKQKAVKRPASMYSTGK) are disordered. NHL repeat units lie at residues 473–516 (IFRV…FSND), 520–563 (KSRF…FSSD), 564–605 (GKFK…FQPN), 609–652 (VTRF…FNQE), 656–699 (MLKF…FDGS), and 700–743 (GSFL…YRYL).

It belongs to the TRIM/RBCC family. In terms of assembly, forms homooligomers. Interacts with TRIM3; this interaction reduces TRIM2 activity. Interacts with myosin V; myosin V may not be a substrate for ubiquitination. Interacts with NEFL. Interacts with phosphorylated BCL2L11. Interacts with SIRPA. Post-translationally, RING-type zinc finger-dependent and UBE2D1-dependent autoubiquitination.

Its subcellular location is the cytoplasm. The catalysed reaction is S-ubiquitinyl-[E2 ubiquitin-conjugating enzyme]-L-cysteine + [acceptor protein]-L-lysine = [E2 ubiquitin-conjugating enzyme]-L-cysteine + N(6)-ubiquitinyl-[acceptor protein]-L-lysine.. The protein operates within protein modification; protein ubiquitination. Functionally, UBE2D1-dependent E3 ubiquitin-protein ligase that mediates the ubiquitination of NEFL and of phosphorylated BCL2L11. Plays a neuroprotective function. May play a role in neuronal rapid ischemic tolerance. Plays a role in antiviral immunity and limits New World arenavirus infection independently of its ubiquitin ligase activity. In Callithrix jacchus (White-tufted-ear marmoset), this protein is Tripartite motif-containing protein 2 (TRIM2).